A 56-amino-acid chain; its full sequence is Protein YqiD (56 aa).

Residues 2–22 (FIAWYWIVLIALVVVGYFLHL) form a helical membrane-spanning segment.

The protein resides in the cell inner membrane. The sequence is that of Protein YqiD from Escherichia coli (strain K12).